The following is a 322-amino-acid chain: Phosphatidylglycerol--prolipoprotein diacylglyceryl transferase (322 aa).

Transmembrane regions (helical) follow at residues valine 23 to tryptophan 43, phenylalanine 53 to valine 73, and glycine 97 to phenylalanine 117. Arginine 143 serves as a coordination point for a 1,2-diacyl-sn-glycero-3-phospho-(1'-sn-glycerol). 2 helical membrane-spanning segments follow: residues proline 191 to isoleucine 211 and leucine 250 to alanine 270.

Belongs to the Lgt family.

The protein resides in the cell membrane. The enzyme catalyses L-cysteinyl-[prolipoprotein] + a 1,2-diacyl-sn-glycero-3-phospho-(1'-sn-glycerol) = an S-1,2-diacyl-sn-glyceryl-L-cysteinyl-[prolipoprotein] + sn-glycerol 1-phosphate + H(+). The protein operates within protein modification; lipoprotein biosynthesis (diacylglyceryl transfer). Catalyzes the transfer of the diacylglyceryl group from phosphatidylglycerol to the sulfhydryl group of the N-terminal cysteine of a prolipoprotein, the first step in the formation of mature lipoproteins. The polypeptide is Phosphatidylglycerol--prolipoprotein diacylglyceryl transferase (Mycoplasmopsis pulmonis (strain UAB CTIP) (Mycoplasma pulmonis)).